The chain runs to 94 residues: Acylphosphatase (94 aa).

The Acylphosphatase-like domain maps to 7–94 (AVRVRISGRV…NMPRDFRITG (88 aa)). Catalysis depends on residues Arg22 and Asn40.

It belongs to the acylphosphatase family.

The enzyme catalyses an acyl phosphate + H2O = a carboxylate + phosphate + H(+). The polypeptide is Acylphosphatase (acyP) (Rhizobium etli (strain ATCC 51251 / DSM 11541 / JCM 21823 / NBRC 15573 / CFN 42)).